Reading from the N-terminus, the 800-residue chain is Mitogen-activated protein kinase kinase kinase 20 (800 aa).

The residue at position 2 (serine 2) is an N-acetylserine. Serine 2, serine 3, and serine 7 each carry phosphoserine; by autocatalysis. A Protein kinase domain is found at 16–277 (LQFFENCGGG…SLPDKCNSFL (262 aa)). ATP-binding positions include 22-30 (CGGGSFGSV) and lysine 45. Aspartate 133 acts as the Proton acceptor in catalysis. Residue threonine 161 is modified to Phosphothreonine; by autocatalysis. A Phosphoserine; by autocatalysis modification is found at serine 165. At serine 275 the chain carries Phosphoserine. The segment at 287 to 308 (IEATLERLKKLERDLSFKEQEL) is leucine-zipper. Position 302 is a phosphoserine; by autocatalysis (serine 302). A phosphoserine mark is found at tryptophan 339, glutamate 429, lysine 434, aspartate 454, and serine 567. One can recognise an SAM domain in the interval 339 to 410 (WTEDDVYCWV…KSAIEKLTHD (72 aa)). At threonine 586 the chain carries Phosphothreonine; by autocatalysis. Residue serine 587 is modified to Phosphoserine; by autocatalysis. Residues serine 593 and serine 599 each carry the phosphoserine modification. Residue threonine 628 is modified to Phosphothreonine. Phosphoserine occurs at positions 633, 637, and 648. Serine 649 and serine 660 each carry phosphoserine; by autocatalysis. Positions 652 to 666 (LNSRDSGFSSGNTDT) are enriched in polar residues. Residues 652–800 (LNSRDSGFSS…RGDHRGWRNF (149 aa)) are disordered. Threonine 664 is subject to Phosphothreonine; by autocatalysis. Residues 667–678 (SSERGRYSDRSR) are compositionally biased toward basic and acidic residues. The tract at residues 670 to 713 (RGRYSDRSRNKYGRGSISLNSSPRGRYSGKSQHSTPSRGRYPGK) is sensing domain (S). The residue at position 685 (serine 685) is a Phosphoserine. 2 stretches are compositionally biased toward polar residues: residues 686-706 (ISLN…STPS) and 717-726 (VSQSALNPHQ). Phosphoserine; by autocatalysis occurs at positions 718 and 720. A phosphoserine mark is found at serine 727 and serine 733. The segment covering 728 to 738 (PDFKRSPRDLH) has biased composition (basic and acidic residues). Threonine 742 carries the post-translational modification Phosphothreonine; by autocatalysis. Basic and acidic residues-rich tracts occupy residues 750–763 (PETD…DSKV) and 785–800 (TNKE…WRNF). The C-terminal domain (CTD) stretch occupies residues 774 to 800 (RKKPHRPSPAKTNKERARGDHRGWRNF).

Belongs to the protein kinase superfamily. STE Ser/Thr protein kinase family. MAP kinase kinase kinase subfamily. As to quaternary structure, homodimer. Interacts with ZNF33A. Component of a signaling complex containing at least AKAP13, PKN1, MAPK14, MAP3K20 and MAP2K3. Within this complex, AKAP13 interacts directly with PKN1, which in turn recruits MAPK14, MAP2K3 and MAP3K20. Interacts with EIF2AK4/GCN2; promoting EIF2AK4/GCN2 kinase activity. In terms of assembly, interacts with isoform ZAKbeta. Interacts with isoform ZAKalpha. Mg(2+) is required as a cofactor. Activated by phosphorylation by PKN1, followed by autophosphorylation on Thr-161 and Ser-165. Autophosphorylation in response to ribotoxic stress promotes dissociation from colliding ribosomes and activation. In terms of tissue distribution, ubiquitously expressed. Isoform ZAKbeta is the predominant form in all tissues examined, except for liver, in which isoform ZAKalpha is more highly expressed.

The protein localises to the cytoplasm. It localises to the nucleus. The enzyme catalyses L-seryl-[protein] + ATP = O-phospho-L-seryl-[protein] + ADP + H(+). The catalysed reaction is L-threonyl-[protein] + ATP = O-phospho-L-threonyl-[protein] + ADP + H(+). With respect to regulation, activated in response to stress, such as ribosomal stress, osmotic shock and ionizing radiation. Activated by phosphorylation by PKN1, followed by autophosphorylation on Thr-161 and Ser-165. Inhibited by nilotinib, sorafenib, dabrafenib, rebastinib and vemurafenib. Selectively inhibited by N-(3)-((1H-Pyrazolo[3,4-b]pyridin-5-yl)ethynyl)benzenesulfonamide compound 3h. Selectively inhibited by 1,2,3-triazole benzenesulfonamides. Stress-activated component of a protein kinase signal transduction cascade that promotes programmed cell death in response to various stress, such as ribosomal stress, osmotic shock and ionizing radiation. Acts by catalyzing phosphorylation of MAP kinase kinases, leading to activation of the JNK (MAPK8/JNK1, MAPK9/JNK2 and/or MAPK10/JNK3) and MAP kinase p38 (MAPK11, MAPK12, MAPK13 and/or MAPK14) pathways. Activates JNK through phosphorylation of MAP2K4/MKK4 and MAP2K7/MKK7, and MAP kinase p38 gamma (MAPK12) via phosphorylation of MAP2K3/MKK3 and MAP2K6/MKK6. Involved in stress associated with adrenergic stimulation: contributes to cardiac decompensation during periods of acute cardiac stress. May be involved in regulation of S and G2 cell cycle checkpoint by mediating phosphorylation of CHEK2. Its function is as follows. Key component of the stress-activated protein kinase signaling cascade in response to ribotoxic stress or UV-B irradiation. Acts as the proximal sensor of ribosome collisions during the ribotoxic stress response (RSR): directly binds to the ribosome by inserting its flexible C-terminus into the ribosomal intersubunit space, thereby acting as a sentinel for colliding ribosomes. Upon ribosome collisions, activates either the stress-activated protein kinase signal transduction cascade or the integrated stress response (ISR), leading to programmed cell death or cell survival, respectively. Dangerous levels of ribosome collisions trigger the autophosphorylation and activation of MAP3K20, which dissociates from colliding ribosomes and phosphorylates MAP kinase kinases, leading to activation of the JNK and MAP kinase p38 pathways that promote programmed cell death. Less dangerous levels of ribosome collisions trigger the integrated stress response (ISR): MAP3K20 activates EIF2AK4/GCN2 independently of its protein-kinase activity, promoting EIF2AK4/GCN2-mediated phosphorylation of EIF2S1/eIF-2-alpha. Also part of the stress-activated protein kinase signaling cascade triggering the NLRP1 inflammasome in response to UV-B irradiation: ribosome collisions activate MAP3K20, which directly phosphorylates NLRP1, leading to activation of the NLRP1 inflammasome and subsequent pyroptosis. NLRP1 is also phosphorylated by MAP kinase p38 downstream of MAP3K20. Also acts as a histone kinase by phosphorylating histone H3 at 'Ser-28' (H3S28ph). Functionally, isoform that lacks the C-terminal region that mediates ribosome-binding: does not act as a sensor of ribosome collisions in response to ribotoxic stress. May act as an antagonist of isoform ZAKalpha: interacts with isoform ZAKalpha, leading to decrease the expression of isoform ZAKalpha. The chain is Mitogen-activated protein kinase kinase kinase 20 from Homo sapiens (Human).